The primary structure comprises 291 residues: Small ribosomal subunit protein uS2 (291 aa).

Residues 256–291 (STTAPPNWEATGGDWATSTAPAEGWAGDAPAGETKW) form a disordered region.

Belongs to the universal ribosomal protein uS2 family. In terms of assembly, component of the small ribosomal subunit. Mature ribosomes consist of a small (40S) and a large (60S) subunit. The 40S subunit contains about 33 different proteins and 1 molecule of RNA (18S). The 60S subunit contains about 49 different proteins and 3 molecules of RNA (25S, 5.8S and 5S). Interacts with RPS21.

It localises to the cytoplasm. Its function is as follows. Required for the assembly and/or stability of the 40S ribosomal subunit. Required for the processing of the 20S rRNA-precursor to mature 18S rRNA in a late step of the maturation of 40S ribosomal subunits. This is Small ribosomal subunit protein uS2 from Coccidioides immitis (strain RS) (Valley fever fungus).